The primary structure comprises 949 residues: Bifunctional uridylyltransferase/uridylyl-removing enzyme (949 aa).

Residues 1 to 377 are uridylyltransferase; the sequence is MARHETSFPE…RFRNRVRKIA (377 aa). The uridylyl-removing stretch occupies residues 378 to 733; sequence GTLDFVDDGG…VRTHDFHAIT (356 aa). In terms of domain architecture, HD spans 494-610; that stretch reads VDEHLLRSVD…VDFAERVQSL (117 aa). ACT domains lie at 734–816 and 845–926; these read EITV…VIAS and VIEV…ERMP. The tract at residues 926–949 is disordered; the sequence is PSGIIAPTPVSRVPHGSKTTKAET.

It belongs to the GlnD family. Requires Mg(2+) as cofactor.

The catalysed reaction is [protein-PII]-L-tyrosine + UTP = [protein-PII]-uridylyl-L-tyrosine + diphosphate. The enzyme catalyses [protein-PII]-uridylyl-L-tyrosine + H2O = [protein-PII]-L-tyrosine + UMP + H(+). Its activity is regulated as follows. Uridylyltransferase (UTase) activity is inhibited by glutamine, while glutamine activates uridylyl-removing (UR) activity. Functionally, modifies, by uridylylation and deuridylylation, the PII regulatory proteins (GlnB and homologs), in response to the nitrogen status of the cell that GlnD senses through the glutamine level. Under low glutamine levels, catalyzes the conversion of the PII proteins and UTP to PII-UMP and PPi, while under higher glutamine levels, GlnD hydrolyzes PII-UMP to PII and UMP (deuridylylation). Thus, controls uridylylation state and activity of the PII proteins, and plays an important role in the regulation of nitrogen fixation and metabolism. The chain is Bifunctional uridylyltransferase/uridylyl-removing enzyme from Rhizobium meliloti (strain 1021) (Ensifer meliloti).